The chain runs to 268 residues: Large ribosomal subunit protein uL4 (268 aa).

This sequence belongs to the universal ribosomal protein uL4 family. In terms of assembly, part of the 50S ribosomal subunit.

One of the primary rRNA binding proteins, this protein initially binds near the 5'-end of the 23S rRNA. It is important during the early stages of 50S assembly. It makes multiple contacts with different domains of the 23S rRNA in the assembled 50S subunit and ribosome. In terms of biological role, forms part of the polypeptide exit tunnel. The sequence is that of Large ribosomal subunit protein uL4 from Nanoarchaeum equitans (strain Kin4-M).